The sequence spans 2609 residues: Mycosubtilin synthase subunit C (2609 aa).

A domain 1 (D-serine-activating) region spans residues 258–1628; it reads PREKTIHQLF…RVCAQPEMTV (1371 aa). Residues 288–695 are adenylation 1; it reads TYQELNEKAN…HIPSIQESIV (408 aa). The region spanning 771 to 845 is the Carrier 1 domain; the sequence is APRTELEKIL…ELVPYVEPVT (75 aa). The residue at position 806 (Ser806) is an O-(pantetheine 4'-phosphoryl)serine. An epimerization 1 region spans residues 853 to 1312; sequence IKGPALLTPI…EISIDELDQF (460 aa). The segment at 1322-1623 is condensation 1; it reads IENIYPLTPM…NTIPVRVCAQ (302 aa). A domain 2 (isoleucine-activating) region spans residues 1778–2359; it reads PKEKTIYQLF…AHAIQAAALP (582 aa). Residues 1808–2205 form an adenylation 2 region; sequence TYRQLNEQAN…LVESVKEAVV (398 aa). Residues 2282–2357 form the Carrier 2 domain; that stretch reads APRTLIEKQL…TMAHAIQAAA (76 aa). Ser2317 carries the post-translational modification O-(pantetheine 4'-phosphoryl)serine. The tract at residues 2375 to 2581 is thioesterase; the sequence is IPVFCFPPLI…ENMSTIRSIM (207 aa).

It belongs to the ATP-dependent AMP-binding enzyme family. Requires pantetheine 4'-phosphate as cofactor.

Functionally, this protein is a multifunctional enzyme, able to activate and polymerize the amino acids Ser and Asn as part of the synthesis of mycosubtilin. The Ser residue is further epimerized to the D-isomer form. The activation sites for these amino acids consist of individual domains. The protein is Mycosubtilin synthase subunit C (mycC) of Bacillus subtilis.